Here is a 132-residue protein sequence, read N- to C-terminus: MNLSTAIISCLCIGVLSYENKFQFTGTVYCKSNAPWCVRIRVIEVDTLVDDGVASVDFCSNEVTQTYDIGGVQENDGLLDRNFELQMVVFHNCSRNTETVFKTGIWRIPLPKAPTVHAPIRQHLNLNTNNSQ.

This is an uncharacterized protein from Caenorhabditis elegans.